The chain runs to 136 residues: MKKSNFSNVNLSMGTGRRKSSVARVYIREGSGNIRVNNRDFDSYIQLENLRTMALSPLVLTNTLGKYDLYINVYGGGISGQSGAIRHGISRALFELDESNKMILRSNGFLTRDSRRVERKKFGQKKARKSFQFSKR.

This sequence belongs to the universal ribosomal protein uS9 family.

The protein is Small ribosomal subunit protein uS9 of Borrelia garinii subsp. bavariensis (strain ATCC BAA-2496 / DSM 23469 / PBi) (Borreliella bavariensis).